The chain runs to 618 residues: Membrane protein insertase YidC (618 aa).

Helical transmembrane passes span 3–23 (KNTI…SFLS), 363–383 (WGLS…IVVF), 439–459 (LPML…PSAI), 478–498 (FITF…FCLL), 520–540 (PQMA…LFVL), and 545–565 (SGLN…MIIL).

Belongs to the OXA1/ALB3/YidC family. Type 1 subfamily. As to quaternary structure, interacts with the Sec translocase complex via SecD. Specifically interacts with transmembrane segments of nascent integral membrane proteins during membrane integration.

The protein localises to the cell membrane. In terms of biological role, required for the insertion and/or proper folding and/or complex formation of integral membrane proteins into the membrane. Involved in integration of membrane proteins that insert both dependently and independently of the Sec translocase complex, as well as at least some lipoproteins. Aids folding of multispanning membrane proteins. The sequence is that of Membrane protein insertase YidC from Bacteroides fragilis (strain YCH46).